Consider the following 411-residue polypeptide: LL-diaminopimelate aminotransferase (411 aa).

Substrate is bound by residues tyrosine 16 and glycine 43. Residues tyrosine 73, alanine 109–lysine 110, tyrosine 133, asparagine 188, tyrosine 219, and serine 247–serine 249 each bind pyridoxal 5'-phosphate. Substrate is bound by residues lysine 110, tyrosine 133, and asparagine 188. An N6-(pyridoxal phosphate)lysine modification is found at lysine 250. The pyridoxal 5'-phosphate site is built by arginine 258 and asparagine 293. Residues asparagine 293 and arginine 389 each coordinate substrate.

This sequence belongs to the class-I pyridoxal-phosphate-dependent aminotransferase family. LL-diaminopimelate aminotransferase subfamily. Homodimer. Pyridoxal 5'-phosphate is required as a cofactor.

The enzyme catalyses (2S,6S)-2,6-diaminopimelate + 2-oxoglutarate = (S)-2,3,4,5-tetrahydrodipicolinate + L-glutamate + H2O + H(+). The protein operates within amino-acid biosynthesis; L-lysine biosynthesis via DAP pathway; LL-2,6-diaminopimelate from (S)-tetrahydrodipicolinate (aminotransferase route): step 1/1. Involved in the synthesis of meso-diaminopimelate (m-DAP or DL-DAP), required for both lysine and peptidoglycan biosynthesis. Catalyzes the direct conversion of tetrahydrodipicolinate to LL-diaminopimelate. This chain is LL-diaminopimelate aminotransferase, found in Methanosphaera stadtmanae (strain ATCC 43021 / DSM 3091 / JCM 11832 / MCB-3).